Consider the following 786-residue polypeptide: uncharacterized protein (786 aa).

361–362 lines the substrate pocket; sequence WD. The Proton donor role is filled by Glu-488. A substrate-binding site is contributed by 590–591; that stretch reads KQ. The segment at 762-786 is disordered; the sequence is TRKPLLPPPPQPPGREPVHRRALAR. Over residues 766 to 776 the composition is skewed to pro residues; it reads LLPPPPQPPGR.

The protein belongs to the glycosyl hydrolase 65 family.

This is an uncharacterized protein from Mycobacterium tuberculosis (strain CDC 1551 / Oshkosh).